A 416-amino-acid polypeptide reads, in one-letter code: Multifunctional CCA protein (416 aa).

ATP is bound by residues Gly-8 and Arg-11. Residues Gly-8 and Arg-11 each coordinate CTP. Residues Asp-21 and Asp-23 each contribute to the Mg(2+) site. Residues Arg-91, Arg-137, and Arg-140 each contribute to the ATP site. CTP is bound by residues Arg-91, Arg-137, and Arg-140. Positions 228-329 (TGVHTLMVLA…VKIFDKADFW (102 aa)) constitute an HD domain.

It belongs to the tRNA nucleotidyltransferase/poly(A) polymerase family. Bacterial CCA-adding enzyme type 1 subfamily. In terms of assembly, monomer. Can also form homodimers and oligomers. It depends on Mg(2+) as a cofactor. The cofactor is Ni(2+).

It carries out the reaction a tRNA precursor + 2 CTP + ATP = a tRNA with a 3' CCA end + 3 diphosphate. It catalyses the reaction a tRNA with a 3' CCA end + 2 CTP + ATP = a tRNA with a 3' CCACCA end + 3 diphosphate. Functionally, catalyzes the addition and repair of the essential 3'-terminal CCA sequence in tRNAs without using a nucleic acid template. Adds these three nucleotides in the order of C, C, and A to the tRNA nucleotide-73, using CTP and ATP as substrates and producing inorganic pyrophosphate. tRNA 3'-terminal CCA addition is required both for tRNA processing and repair. Also involved in tRNA surveillance by mediating tandem CCA addition to generate a CCACCA at the 3' terminus of unstable tRNAs. While stable tRNAs receive only 3'-terminal CCA, unstable tRNAs are marked with CCACCA and rapidly degraded. This is Multifunctional CCA protein from Shewanella baltica (strain OS195).